A 420-amino-acid polypeptide reads, in one-letter code: Serine hydroxymethyltransferase (420 aa).

Residues Leu-121 and 125–127 (GHL) contribute to the (6S)-5,6,7,8-tetrahydrofolate site. Residue Lys-230 is modified to N6-(pyridoxal phosphate)lysine.

This sequence belongs to the SHMT family. Homodimer. Requires pyridoxal 5'-phosphate as cofactor.

Its subcellular location is the cytoplasm. The catalysed reaction is (6R)-5,10-methylene-5,6,7,8-tetrahydrofolate + glycine + H2O = (6S)-5,6,7,8-tetrahydrofolate + L-serine. It participates in one-carbon metabolism; tetrahydrofolate interconversion. Its pathway is amino-acid biosynthesis; glycine biosynthesis; glycine from L-serine: step 1/1. Its function is as follows. Catalyzes the reversible interconversion of serine and glycine with tetrahydrofolate (THF) serving as the one-carbon carrier. This reaction serves as the major source of one-carbon groups required for the biosynthesis of purines, thymidylate, methionine, and other important biomolecules. Also exhibits THF-independent aldolase activity toward beta-hydroxyamino acids, producing glycine and aldehydes, via a retro-aldol mechanism. This is Serine hydroxymethyltransferase from Streptomyces avermitilis (strain ATCC 31267 / DSM 46492 / JCM 5070 / NBRC 14893 / NCIMB 12804 / NRRL 8165 / MA-4680).